Consider the following 215-residue polypeptide: 3-demethoxyubiquinol 3-hydroxylase (215 aa).

Fe cation-binding residues include glutamate 64, glutamate 94, histidine 97, glutamate 146, glutamate 178, and histidine 181.

This sequence belongs to the COQ7 family. Fe cation serves as cofactor.

It localises to the cell membrane. The catalysed reaction is a 5-methoxy-2-methyl-3-(all-trans-polyprenyl)benzene-1,4-diol + AH2 + O2 = a 3-demethylubiquinol + A + H2O. It functions in the pathway cofactor biosynthesis; ubiquinone biosynthesis. Functionally, catalyzes the hydroxylation of 2-nonaprenyl-3-methyl-6-methoxy-1,4-benzoquinol during ubiquinone biosynthesis. The protein is 3-demethoxyubiquinol 3-hydroxylase of Azotobacter vinelandii (strain DJ / ATCC BAA-1303).